A 396-amino-acid polypeptide reads, in one-letter code: 1-deoxy-D-xylulose 5-phosphate reductoisomerase (396 aa).

The NADPH site is built by Thr-17, Gly-18, Ser-19, Ile-20, Asn-47, and Asn-130. Lys-131 contacts 1-deoxy-D-xylulose 5-phosphate. Position 132 (Glu-132) interacts with NADPH. Mn(2+) is bound at residue Asp-156. 1-deoxy-D-xylulose 5-phosphate contacts are provided by Ser-157, Glu-158, Ser-182, and His-205. Glu-158 lines the Mn(2+) pocket. Position 211 (Gly-211) interacts with NADPH. 1-deoxy-D-xylulose 5-phosphate contacts are provided by Ser-218, Asn-223, Lys-224, and Glu-227. Glu-227 contributes to the Mn(2+) binding site.

The protein belongs to the DXR family. The cofactor is Mg(2+). It depends on Mn(2+) as a cofactor.

It carries out the reaction 2-C-methyl-D-erythritol 4-phosphate + NADP(+) = 1-deoxy-D-xylulose 5-phosphate + NADPH + H(+). The protein operates within isoprenoid biosynthesis; isopentenyl diphosphate biosynthesis via DXP pathway; isopentenyl diphosphate from 1-deoxy-D-xylulose 5-phosphate: step 1/6. Its function is as follows. Catalyzes the NADPH-dependent rearrangement and reduction of 1-deoxy-D-xylulose-5-phosphate (DXP) to 2-C-methyl-D-erythritol 4-phosphate (MEP). This chain is 1-deoxy-D-xylulose 5-phosphate reductoisomerase, found in Rhizobium johnstonii (strain DSM 114642 / LMG 32736 / 3841) (Rhizobium leguminosarum bv. viciae).